The primary structure comprises 292 residues: Bifunctional protein FolD (292 aa).

NADP(+)-binding positions include 169–171 and serine 194; that span reads GRS.

It belongs to the tetrahydrofolate dehydrogenase/cyclohydrolase family. As to quaternary structure, homodimer.

The catalysed reaction is (6R)-5,10-methylene-5,6,7,8-tetrahydrofolate + NADP(+) = (6R)-5,10-methenyltetrahydrofolate + NADPH. The enzyme catalyses (6R)-5,10-methenyltetrahydrofolate + H2O = (6R)-10-formyltetrahydrofolate + H(+). It functions in the pathway one-carbon metabolism; tetrahydrofolate interconversion. In terms of biological role, catalyzes the oxidation of 5,10-methylenetetrahydrofolate to 5,10-methenyltetrahydrofolate and then the hydrolysis of 5,10-methenyltetrahydrofolate to 10-formyltetrahydrofolate. This chain is Bifunctional protein FolD, found in Nostoc punctiforme (strain ATCC 29133 / PCC 73102).